The primary structure comprises 225 residues: UPF0758 protein BPP1850 (225 aa).

The 123-residue stretch at 103–225 folds into the MPN domain; sequence ALANPDLVRR…TVSMAAQGHL (123 aa). Zn(2+)-binding residues include histidine 174, histidine 176, and aspartate 187. The JAMM motif motif lies at 174-187; sequence HNHPGGTAAASAAD.

The protein belongs to the UPF0758 family.

This chain is UPF0758 protein BPP1850, found in Bordetella parapertussis (strain 12822 / ATCC BAA-587 / NCTC 13253).